The sequence spans 169 residues: Protein GrpE (169 aa).

Residues 1–25 form a disordered region; sequence MSEEKQNGQIQEETVENSENQNNEL. Positions 7–23 are enriched in polar residues; the sequence is NGQIQEETVENSENQNN.

The protein belongs to the GrpE family. As to quaternary structure, homodimer.

It is found in the cytoplasm. Its function is as follows. Participates actively in the response to hyperosmotic and heat shock by preventing the aggregation of stress-denatured proteins, in association with DnaK and GrpE. It is the nucleotide exchange factor for DnaK and may function as a thermosensor. Unfolded proteins bind initially to DnaJ; upon interaction with the DnaJ-bound protein, DnaK hydrolyzes its bound ATP, resulting in the formation of a stable complex. GrpE releases ADP from DnaK; ATP binding to DnaK triggers the release of the substrate protein, thus completing the reaction cycle. Several rounds of ATP-dependent interactions between DnaJ, DnaK and GrpE are required for fully efficient folding. The polypeptide is Protein GrpE (Campylobacter lari (strain RM2100 / D67 / ATCC BAA-1060)).